The sequence spans 2226 residues: DNA polymerase epsilon catalytic subunit A (2226 aa).

The disordered stretch occupies residues 1240 to 1265 (RVSKVTSRKRRNGKANNVSDSEEEER). The Zn(2+) site is built by C2112, C2115, C2134, and C2137. The CysA-type zinc-finger motif lies at 2112 to 2137 (CDYCNYIRDIDFCRDEQKNIWNCSNC). Positions 2168, 2171, 2183, and 2185 each coordinate [4Fe-4S] cluster. The CysB motif motif lies at 2168–2185 (CSKCHQIKSDNMSEYCKC).

It belongs to the DNA polymerase type-B family. In terms of assembly, heterotetramer. Consists of 4 subunits: POL2, DPB2, DPB3 and DPB4. Requires [4Fe-4S] cluster as cofactor.

The protein resides in the nucleus. It catalyses the reaction DNA(n) + a 2'-deoxyribonucleoside 5'-triphosphate = DNA(n+1) + diphosphate. Functionally, DNA polymerase II participates in chromosomal DNA replication. The chain is DNA polymerase epsilon catalytic subunit A (POL2) from Debaryomyces hansenii (strain ATCC 36239 / CBS 767 / BCRC 21394 / JCM 1990 / NBRC 0083 / IGC 2968) (Yeast).